A 377-amino-acid polypeptide reads, in one-letter code: 23S rRNA (uracil(747)-C(5))-methyltransferase RlmC (377 aa).

Positions 3, 11, 14, and 87 each coordinate [4Fe-4S] cluster. Residues Q212, F241, E262, and N307 each coordinate S-adenosyl-L-methionine. Residue C334 is the Nucleophile of the active site.

This sequence belongs to the class I-like SAM-binding methyltransferase superfamily. RNA M5U methyltransferase family. RlmC subfamily.

The enzyme catalyses uridine(747) in 23S rRNA + S-adenosyl-L-methionine = 5-methyluridine(747) in 23S rRNA + S-adenosyl-L-homocysteine + H(+). Functionally, catalyzes the formation of 5-methyl-uridine at position 747 (m5U747) in 23S rRNA. This is 23S rRNA (uracil(747)-C(5))-methyltransferase RlmC from Photorhabdus laumondii subsp. laumondii (strain DSM 15139 / CIP 105565 / TT01) (Photorhabdus luminescens subsp. laumondii).